Here is a 376-residue protein sequence, read N- to C-terminus: TraB domain-containing protein (376 aa).

Met1 is subject to N-acetylmethionine. The disordered stretch occupies residues 1-34; that stretch reads MDGEEQQPPHEANVEPVVPSEASEPVPRVLSGDP. The segment covering 14–27 has biased composition (low complexity); sequence VEPVVPSEASEPVP. Thr65 bears the Phosphothreonine mark.

This chain is TraB domain-containing protein (TRABD), found in Homo sapiens (Human).